The chain runs to 429 residues: Serine hydroxymethyltransferase (429 aa).

(6S)-5,6,7,8-tetrahydrofolate is bound by residues Leu127 and 131 to 133 (GHL). Lys236 is subject to N6-(pyridoxal phosphate)lysine. Residue Glu252 participates in (6S)-5,6,7,8-tetrahydrofolate binding.

It belongs to the SHMT family. As to quaternary structure, homodimer. The cofactor is pyridoxal 5'-phosphate.

The protein resides in the cytoplasm. The catalysed reaction is (6R)-5,10-methylene-5,6,7,8-tetrahydrofolate + glycine + H2O = (6S)-5,6,7,8-tetrahydrofolate + L-serine. It functions in the pathway one-carbon metabolism; tetrahydrofolate interconversion. The protein operates within amino-acid biosynthesis; glycine biosynthesis; glycine from L-serine: step 1/1. Functionally, catalyzes the reversible interconversion of serine and glycine with tetrahydrofolate (THF) serving as the one-carbon carrier. This reaction serves as the major source of one-carbon groups required for the biosynthesis of purines, thymidylate, methionine, and other important biomolecules. Also exhibits THF-independent aldolase activity toward beta-hydroxyamino acids, producing glycine and aldehydes, via a retro-aldol mechanism. The protein is Serine hydroxymethyltransferase of Rhodospirillum centenum (strain ATCC 51521 / SW).